A 152-amino-acid polypeptide reads, in one-letter code: Natriuretic peptides A (152 aa).

The N-terminal stretch at 1–24 (MGSSAITTSFLLFVAFQLPGQTGA) is a signal peptide. 2 consecutive propeptides follow at residues 25–122 (NPVY…TAPR) and 92–102 (EMGAPSDGDPG). The disordered stretch occupies residues 50 to 108 (MPLEDEAVPSQVLSEQNEEAGAPLSPLSEVPPWDGGRSTQPREMGAPSDGDPGNPPRSV). A Phosphoserine modification is found at serine 128. The cysteines at positions 129 and 145 are disulfide-linked. The tract at residues 146-150 (NSFRY) is important for degradation of atrial natriuretic peptide by IDE.

The protein belongs to the natriuretic peptide family. Homodimer; disulfide-linked antiparallel dimer. Post-translationally, the precursor molecule is proteolytically cleaved by CORIN at Arg-122 to produce the atrial natriuretic peptide. Undergoes further proteolytic cleavage by unknown proteases to give rise to long-acting natriuretic peptide, vessel dilator and kaliuretic peptide. Additional processing gives rise to the auriculin and atriopeptin peptides. In the kidneys, alternative processing by an unknown protease results in the peptide urodilatin. Cleavage by MME initiates degradation of the factor and thereby regulates its activity. Degradation by IDE results in reduced activation of NPR1 (in vitro). During IDE degradation, the resulting products can temporarily stimulate NPR2 to produce cGMP, before the fragments are completely degraded and inactivated by IDE (in vitro). In terms of processing, degraded by IDE. Post-translationally, phosphorylation on Ser-128 decreases vasorelaxant activity.

It localises to the secreted. It is found in the perikaryon. The protein resides in the cell projection. In terms of biological role, hormone that plays a key role in mediating cardio-renal homeostasis, and is involved in vascular remodeling and regulating energy metabolism. Acts by specifically binding and stimulating NPR1 to produce cGMP, which in turn activates effector proteins, such as PRKG1, that drive various biological responses. Regulates vasodilation, natriuresis, diuresis and aldosterone synthesis and is therefore essential for regulating blood pressure, controlling the extracellular fluid volume and maintaining the fluid-electrolyte balance. Also involved in inhibiting cardiac remodeling and cardiac hypertrophy by inducing cardiomyocyte apoptosis and attenuating the growth of cardiomyocytes and fibroblasts. Plays a role in female pregnancy by promoting trophoblast invasion and spiral artery remodeling in uterus, and thus prevents pregnancy-induced hypertension. In adipose tissue, acts in various cGMP- and PKG-dependent pathways to regulate lipid metabolism and energy homeostasis. This includes up-regulating lipid metabolism and mitochondrial oxygen utilization by activating the AMP-activated protein kinase (AMPK), and increasing energy expenditure by acting via MAPK11 to promote the UCP1-dependent thermogenesis of brown adipose tissue. Binds the clearance receptor NPR3 which removes the hormone from circulation. Functionally, may have a role in cardio-renal homeostasis through regulation of natriuresis, diuresis, vasodilation, and inhibiting aldosterone synthesis. In vitro, promotes the production of cGMP and induces vasodilation. May promote natriuresis, at least in part, by enhancing prostaglandin E2 synthesis resulting in the inhibition of renal Na+-K+-ATPase. However reports on the involvement of this peptide in mammal blood volume and blood pressure homeostasis are conflicting; according to a report, in vivo it is not sufficient to activate cGMP and does not inhibit collecting duct transport nor effect diuresis and natriuresis. Appears to bind to specific receptors that are distinct from the receptors bound by atrial natriuretic peptide and vessel dilator. Possibly enhances protein excretion in urine by decreasing proximal tubular protein reabsorption. Its function is as follows. May have a role in cardio-renal homeostasis through regulation of natriuresis, diuresis, and vasodilation. In vitro, promotes the production of cGMP and induces vasodilation. May promote natriuresis, at least in part, by enhancing prostaglandin E2 synthesis resulting in the inhibition of renal Na+-K+-ATPase. However reports on the involvement of this peptide in mammal blood volume and blood pressure homeostasis are conflicting; according to a report it is not sufficient to activate cGMP and does not inhibit collecting duct transport nor effect diuresis and natriuresis. Appears to bind to specific receptors that are distinct from the receptors bound by the atrial natriuretic and long-acting natriuretic peptides. Possibly functions in protein excretion in urine by maintaining the integrity of the proximal tubules and enhancing protein excretion by decreasing proximal tubular protein reabsorption. May have a role in cardio-renal homeostasis through regulation of diuresis and inhibiting aldosterone synthesis. In vitro, promotes the production of cGMP and induces vasodilation. May promote natriuresis, at least in part, by enhancing prostaglandin E2 synthesis resulting in the inhibition of renal Na+-K+-ATPase. May have a role in potassium excretion but not sodium excretion (natriuresis). Possibly enhances protein excretion in urine by decreasing proximal tubular protein reabsorption. In terms of biological role, hormone produced in the kidneys that appears to be important for maintaining cardio-renal homeostasis. Mediates vasodilation, natriuresis and diuresis primarily in the renal system, in order to maintain the extracellular fluid volume and control the fluid-electrolyte balance. Specifically binds and stimulates cGMP production by renal transmembrane receptors, likely NPR1. Urodilatin not ANP, may be the natriuretic peptide responsible for the regulation of sodium and water homeostasis in the kidney. Functionally, may have a role in cardio-renal homeostasis through regulation of natriuresis and vasodilation. In vivo promotes natriuresis and in vitro, vasodilates renal artery strips. Its function is as follows. May have a role in cardio-renal homeostasis through regulation of regulation of natriuresis and vasodilation. In vivo promotes natriuresis. In vitro, vasodilates intestinal smooth muscle but not smooth muscle strips. May have a role in cardio-renal homeostasis through regulation of natriuresis and vasodilation. In vivo promotes natriuresis. In vitro, selectively vasodilates intestinal and vascular smooth muscle strips. In terms of biological role, may have a role in cardio-renal homeostasis through regulation of natriuresis and vasodilation. In vivo promotes natriuresis. In vitro, selectively vasodilates intestinal smooth muscle but not vascular smooth muscle strips. The polypeptide is Natriuretic peptides A (NPPA) (Ovis aries (Sheep)).